The sequence spans 328 residues: Formimidoylglutamase (328 aa).

Mn(2+)-binding residues include His133, Asp159, His161, Asp163, Asp253, and Asp255.

Belongs to the arginase family. Requires Mn(2+) as cofactor.

The catalysed reaction is N-formimidoyl-L-glutamate + H2O = formamide + L-glutamate. The protein operates within amino-acid degradation; L-histidine degradation into L-glutamate; L-glutamate from N-formimidoyl-L-glutamate (hydrolase route): step 1/1. Its function is as follows. Catalyzes the conversion of N-formimidoyl-L-glutamate to L-glutamate and formamide. This Streptococcus pyogenes serotype M18 (strain MGAS8232) protein is Formimidoylglutamase.